We begin with the raw amino-acid sequence, 302 residues long: Rhomboid-related protein 2 (302 aa).

A disordered region spans residues 1 to 38 (MAVAHEMEMESVNLNMEREGKEEPEEEKMKGNGEGKDF). The segment covering 16–38 (MEREGKEEPEEEKMKGNGEGKDF) has biased composition (basic and acidic residues). 7 helical membrane-spanning segments follow: residues 71–91 (PLFI…YAVW), 127–147 (LVHA…VLGI), 158–178 (VGLV…IFDP), 182–202 (LVGA…NVIV), 211–231 (FGIV…GFAL), 244–264 (VSFA…YTVF), and 277–297 (FWIA…FNIF). Catalysis depends on serine 186, which acts as the Nucleophile. Histidine 249 is a catalytic residue.

Belongs to the peptidase S54 family. In terms of processing, proteolytic processing of the proenzyme produces an N- and a C-terminal fragment. The processing is required for activation of the protease.

Its subcellular location is the cell membrane. The catalysed reaction is Cleaves type-1 transmembrane domains using a catalytic dyad composed of serine and histidine that are contributed by different transmembrane domains.. Its function is as follows. Involved in regulated intramembrane proteolysis and the subsequent release of functional polypeptides from their membrane anchors. Known substrate: EFNB3. This is Rhomboid-related protein 2 (Rhbdl2) from Mus musculus (Mouse).